A 186-amino-acid chain; its full sequence is MEQEKQAQIEQAVTTILEAVGEDTQRAGLIDTPKRVAKMYAEVFSGLTEPEFDDYKLFDSLNEGEMVLVKDIAFYSMCEHHLLPFYGKVHVAYLPEGGKVLGLSKLPRLVEHCAKRPTVQEDLTVTIARKLQENIPVKGIAVAIEAEHMCMTMRGVKTPQSSTKTFQFTGLFKEQEWKNQFLMEIR.

Zn(2+)-binding residues include Cys-78, His-81, and Cys-150.

Belongs to the GTP cyclohydrolase I family. As to quaternary structure, toroid-shaped homodecamer, composed of two pentamers of five dimers.

It catalyses the reaction GTP + H2O = 7,8-dihydroneopterin 3'-triphosphate + formate + H(+). Its pathway is cofactor biosynthesis; 7,8-dihydroneopterin triphosphate biosynthesis; 7,8-dihydroneopterin triphosphate from GTP: step 1/1. The chain is GTP cyclohydrolase 1 from Enterococcus faecalis (strain ATCC 700802 / V583).